Here is a 433-residue protein sequence, read N- to C-terminus: Signal recognition particle 54 kDa protein (433 aa).

Residues 106–113, 186–190, and 244–247 each bind GTP; these read GVEGSGKT, DTAGR, and TKMD.

It belongs to the GTP-binding SRP family. SRP54 subfamily. As to quaternary structure, part of the signal recognition particle protein translocation system, which is composed of SRP and FtsY. Archaeal SRP consists of a 7S RNA molecule of 300 nucleotides and two protein subunits: SRP54 and SRP19.

Its subcellular location is the cytoplasm. It carries out the reaction GTP + H2O = GDP + phosphate + H(+). Functionally, involved in targeting and insertion of nascent membrane proteins into the cytoplasmic membrane. Binds to the hydrophobic signal sequence of the ribosome-nascent chain (RNC) as it emerges from the ribosomes. The SRP-RNC complex is then targeted to the cytoplasmic membrane where it interacts with the SRP receptor FtsY. The chain is Signal recognition particle 54 kDa protein from Pyrobaculum neutrophilum (strain DSM 2338 / JCM 9278 / NBRC 100436 / V24Sta) (Thermoproteus neutrophilus).